Reading from the N-terminus, the 443-residue chain is Protein translocase subunit SecY (443 aa).

10 helical membrane-spanning segments follow: residues 24-44 (LFVIGALIVFRIGSFIPIPGI), 77-97 (IFALGIMPYISASIIIQLLTV), 125-145 (LVLAIFQSIGIATGLPNMPGM), 154-174 (FAFYFTAVVSLVTGTMFLMWL), 183-203 (IGNGISIIIFAGIVAGLPPAI), 217-237 (FLVLLLVAVLVFAVTFFVVFV), 274-294 (VIPAIFASSIILFPATIASWF), 317-337 (YVLLYASAIIFFCFFYTALVF), 370-390 (MTRLTLVGALYITFICLIPEF), and 397-417 (VPFYFGGTSLLIVVVVIMDFM).

Belongs to the SecY/SEC61-alpha family. As to quaternary structure, component of the Sec protein translocase complex. Heterotrimer consisting of SecY, SecE and SecG subunits. The heterotrimers can form oligomers, although 1 heterotrimer is thought to be able to translocate proteins. Interacts with the ribosome. Interacts with SecDF, and other proteins may be involved. Interacts with SecA.

Its subcellular location is the cell inner membrane. Functionally, the central subunit of the protein translocation channel SecYEG. Consists of two halves formed by TMs 1-5 and 6-10. These two domains form a lateral gate at the front which open onto the bilayer between TMs 2 and 7, and are clamped together by SecE at the back. The channel is closed by both a pore ring composed of hydrophobic SecY resides and a short helix (helix 2A) on the extracellular side of the membrane which forms a plug. The plug probably moves laterally to allow the channel to open. The ring and the pore may move independently. The chain is Protein translocase subunit SecY from Escherichia coli O157:H7.